Consider the following 986-residue polypeptide: Translation initiation factor IF-2 (986 aa).

Basic and acidic residues predominate over residues 49–59 (EFAKDNAKGDS). Residues 49–370 (EFAKDNAKGD…KNRLAKRHEY (322 aa)) are disordered. Low complexity predominate over residues 60-112 (KPASSAQKPAAKPVQQRRPAAPSAPASTSSSAPTPAAPARQASPASAHQQAPT). Basic and acidic residues predominate over residues 135 to 168 (GQHDNRENGRDNREGRENGRQSRPNDRRNNDRRN). The segment covering 170–182 (QGRPNNGQPGQHQ) has biased composition (low complexity). Gly residues-rich tracts occupy residues 254 to 286 (GRGGRPGRPGQGQGQGRGFRGGRPGQGGQGGPR) and 296 to 353 (GQGG…GRQG). A compositionally biased stretch (basic residues) spans 357–366 (SKARKNRLAK). Residues 479–651 (PRPPVVTVMG…VLLTADAELD (173 aa)) form the tr-type G domain. Residues 488-495 (GHVDHGKT) are G1. A GTP-binding site is contributed by 488–495 (GHVDHGKT). The G2 stretch occupies residues 513–517 (GITQR). The tract at residues 538–541 (DTPG) is G3. GTP is bound by residues 538 to 542 (DTPGH) and 592 to 595 (NKID). Residues 592-595 (NKID) form a G4 region. The interval 628–630 (SAK) is G5.

This sequence belongs to the TRAFAC class translation factor GTPase superfamily. Classic translation factor GTPase family. IF-2 subfamily.

It is found in the cytoplasm. In terms of biological role, one of the essential components for the initiation of protein synthesis. Protects formylmethionyl-tRNA from spontaneous hydrolysis and promotes its binding to the 30S ribosomal subunits. Also involved in the hydrolysis of GTP during the formation of the 70S ribosomal complex. This chain is Translation initiation factor IF-2, found in Bifidobacterium longum subsp. infantis (strain ATCC 15697 / DSM 20088 / JCM 1222 / NCTC 11817 / S12).